Consider the following 111-residue polypeptide: Putative pterin-4-alpha-carbinolamine dehydratase (111 aa).

The protein belongs to the pterin-4-alpha-carbinolamine dehydratase family.

It carries out the reaction (4aS,6R)-4a-hydroxy-L-erythro-5,6,7,8-tetrahydrobiopterin = (6R)-L-erythro-6,7-dihydrobiopterin + H2O. This is Putative pterin-4-alpha-carbinolamine dehydratase from Chlorobaculum tepidum (strain ATCC 49652 / DSM 12025 / NBRC 103806 / TLS) (Chlorobium tepidum).